A 659-amino-acid polypeptide reads, in one-letter code: Nitrate import ATP-binding protein NrtC (659 aa).

Positions 5-239 (LAVDHVHQVF…RPRQRLEMME (235 aa)) constitute an ABC transporter domain. 42-49 (GHSGCGKS) serves as a coordination point for ATP. The interval 255 to 278 (QQQRRAKRRAKAAAPAPAVAASQQ) is linker. Residues 279–659 (KTVRLGFLPG…VAPIPLATSA (381 aa)) are nrtA-like.

Belongs to the ABC transporter superfamily. Nitrate/nitrite/cyanate uptake transporter (NitT) (TC 3.A.1.16) family. The complex is composed of two ATP-binding proteins (NrtC and NrtD), two transmembrane proteins (NrtB) and a solute-binding protein (NrtA).

It localises to the cell inner membrane. It carries out the reaction nitrate(out) + ATP + H2O = nitrate(in) + ADP + phosphate + H(+). Transport is inhibited by ammonium. The C-terminal domain of NrtC is involved in the ammonium-promoted inhibition of the nitrate/nitrite transporter. Part of the ABC transporter complex NrtABCD involved in nitrate uptake. The complex is probably also involved in nitrite transport. Probably responsible for energy coupling to the transport system. The chain is Nitrate import ATP-binding protein NrtC from Synechococcus elongatus (strain ATCC 33912 / PCC 7942 / FACHB-805) (Anacystis nidulans R2).